Reading from the N-terminus, the 262-residue chain is Ornithine carbamoyltransferase (262 aa).

Carbamoyl phosphate-binding positions include 3-7 (STRTR), Gln30, Arg54, and 81-84 (HPTQ). Residues Asn114, Asp178, and 182 to 183 (SM) contribute to the L-ornithine site. Carbamoyl phosphate contacts are provided by residues 219-222 (HCLP) and Thr247.

Belongs to the aspartate/ornithine carbamoyltransferase superfamily. OTCase family.

Its subcellular location is the cytoplasm. It catalyses the reaction carbamoyl phosphate + L-ornithine = L-citrulline + phosphate + H(+). Its pathway is amino-acid biosynthesis; L-arginine biosynthesis; L-arginine from L-ornithine and carbamoyl phosphate: step 1/3. Reversibly catalyzes the transfer of the carbamoyl group from carbamoyl phosphate (CP) to the N(epsilon) atom of ornithine (ORN) to produce L-citrulline. This chain is Ornithine carbamoyltransferase (argF), found in Neisseria mucosa.